Consider the following 526-residue polypeptide: piRNA biogenesis factor prde-1 (526 aa).

The tract at residues 436–526 is disordered; sequence EAKEEPIDKK…RRRGCEIRRK (91 aa). Positions 439 to 448 are enriched in basic and acidic residues; sequence EEPIDKKKDP. The span at 458–467 shows a compositional bias: basic residues; sequence GKKRRGRKPK. Over residues 468–487 the composition is skewed to basic and acidic residues; it reads KKDDPKMELKDEVKDLKDFV. Positions 489-498 are enriched in low complexity; it reads EESTSASSSA.

As to expression, expressed in male and female germ cells.

The protein resides in the nucleus. It is found in the chromosome. Functionally, nuclear factor required for the production of piwi-interacting RNA (piRNA) precursors. Specifically required for piRNAs produced from loci associated with the Ruby motif. Promotes binding of the transcription factor snpc-4 at piRNA genomic clusters. Required for normal fertility. This Caenorhabditis elegans protein is piRNA biogenesis factor prde-1.